We begin with the raw amino-acid sequence, 178 residues long: Cytochrome b6-f complex subunit 4 (178 aa).

3 helical membrane-spanning segments follow: residues 36–56, 95–115, and 131–151; these read LSYI…GLAV, LLGV…PFLE, and TVSL…ALPI.

The protein belongs to the cytochrome b family. PetD subfamily. In terms of assembly, the 4 large subunits of the cytochrome b6-f complex are cytochrome b6, subunit IV (17 kDa polypeptide, petD), cytochrome f and the Rieske protein, while the 4 small subunits are petG, petL, petM and petN. The complex functions as a dimer.

It localises to the plastid. The protein resides in the chloroplast thylakoid membrane. Its function is as follows. Component of the cytochrome b6-f complex, which mediates electron transfer between photosystem II (PSII) and photosystem I (PSI), cyclic electron flow around PSI, and state transitions. This is Cytochrome b6-f complex subunit 4 from Picea abies (Norway spruce).